We begin with the raw amino-acid sequence, 530 residues long: Chaperone Ric-8A (530 aa).

Ser-435 is modified (phosphoserine; by CK2). A Phosphothreonine; by CK2 modification is found at Thr-440. At Thr-442 the chain carries Phosphothreonine. 4 positions are modified to phosphoserine: Ser-501, Ser-522, Ser-523, and Ser-527.

It belongs to the synembryn family. Interacts with GDP-bound G alpha proteins GNAI1, GNAO1 and GNAQ, and with GNA13 with lower affinity. Does not interact with G-alpha proteins when they are in complex with subunits beta and gamma. Interacts (via C-terminus) with RGS14; the interaction stimulates the dissociation of the complex between RGS14 and the active GTP-bound form of GNAI1. Interacts with NCS1; interaction is favored in the absence of Ca(2+) and myristoylation of NCS1 is not required. Phosphorylated at Ser-435 and Thr-440 by CK2, stabilizing its interface with G alpha proteins.

The protein localises to the cytoplasm. Its subcellular location is the cell cortex. In terms of biological role, chaperone that specifically binds and folds nascent G alpha proteins prior to G protein heterotrimer formation, promoting their stability and activity: folds GNAI1, GNAO1, GNA13 and GNAQ. Does not fold G(s) G-alpha proteins GNAS nor GNAL. Also acts as a guanine nucleotide exchange factor (GEF) for G alpha proteins by stimulating exchange of bound GDP for free GTP. Involved in regulation of microtubule pulling forces during mitotic movement of chromosomes by stimulating G(i)-alpha protein (GNAI1), possibly leading to release G(i)-alpha-GTP and NuMA proteins from the NuMA-GPSM2-G(i)-alpha-GDP complex. Also acts as an activator for G(q)-alpha (GNAQ) protein by enhancing the G(q)-coupled receptor-mediated ERK activation. This Rattus norvegicus (Rat) protein is Chaperone Ric-8A.